A 344-amino-acid chain; its full sequence is Fructose-1,6-bisphosphatase class 1 (344 aa).

Mg(2+) is bound by residues Glu92, Asp115, Leu117, and Asp118. Residues 118–121, Asn211, Tyr244, and Lys274 each bind substrate; that span reads DGSS. Position 280 (Glu280) interacts with Mg(2+).

This sequence belongs to the FBPase class 1 family. In terms of assembly, homotetramer. The cofactor is Mg(2+).

The protein localises to the cytoplasm. It catalyses the reaction beta-D-fructose 1,6-bisphosphate + H2O = beta-D-fructose 6-phosphate + phosphate. It participates in carbohydrate biosynthesis; gluconeogenesis. The protein is Fructose-1,6-bisphosphatase class 1 of Aeromonas hydrophila subsp. hydrophila (strain ATCC 7966 / DSM 30187 / BCRC 13018 / CCUG 14551 / JCM 1027 / KCTC 2358 / NCIMB 9240 / NCTC 8049).